Reading from the N-terminus, the 318-residue chain is Protein OPG137 (318 aa).

Positions 145–172 (VYDKDKRIQMLEDEVVNLRNQRSNTKSS) form a coiled coil.

It belongs to the orthopoxvirus OPG137 family. In terms of assembly, homomultimer. Interacts with OPG160. Post-translationally, phosphorylated by a OPG054-independent mechanism.

It is found in the host cytoplasm. In terms of biological role, required for viral crescent formation early during virus morphogenesis. The polypeptide is Protein OPG137 (OPG137) (Vaccinia virus (strain Ankara) (VACV)).